The primary structure comprises 589 residues: Ubiquilin-1 (589 aa).

Gly residues predominate over residues 1–11 (MAESGESGGPP). Disordered regions lie at residues 1–35 (MAES…AEPK) and 110–145 (NRPQ…ATSN). Position 2 is an N-acetylalanine (Ala2). A compositionally biased stretch (low complexity) spans 12–35 (GSQDSAAGAEGAGAPAAAASAEPK). One can recognise a Ubiquitin-like domain in the interval 37-111 (MKVTVKTPKE…VHLVIKTQNR (75 aa)). Polar residues predominate over residues 110 to 124 (NRPQDHSAQQTNTAG). The segment covering 125–145 (SNVTTSSTPNSNSTSGSATSN) has biased composition (low complexity). Residues 178-428 (QLLSNPEMMV…LNNPLFAGNP (251 aa)) form an interaction with UBXN4 region. STI1 domains follow at residues 182–210 (NPEM…QLIM) and 212–251 (NPQM…MQEM). The interval 295-371 (PFASLVSNTS…NLVPGVGASM (77 aa)) is disordered. Residues 299-313 (LVSNTSSGEGSQPSR) are compositionally biased toward polar residues. Low complexity predominate over residues 327 to 360 (QTSQSSSASSGTASTVGGTTGSTASGTSGQSTTA). STI1 domains follow at residues 387–434 (NPQL…QEQM) and 438–470 (LPTF…QQGL). Residues 488-520 (LGALGSTGGSSGTNGSNATPSENTSPTAGTTEP) form a disordered region. The span at 489-499 (GALGSTGGSSG) shows a compositional bias: gly residues. A compositionally biased stretch (polar residues) spans 509 to 520 (ENTSPTAGTTEP). Residues 546–586 (RFQQQLEQLSAMGFLNREANLQALIATGGDINAAIERLLGS) enclose the UBA domain.

Monomer and homodimer. Heterodimer with UBQLN2. Binds CD47, NBL1, GABRA1, GABRA2, GABRA3, GABRA6, GABRB1, GABRB2 and GABRB3. Binds UBE3A, BTRC, P4HB and MTOR. Interacts with the proteasome 19S subunit. Interacts (via ubiquitin-like domain) with TREX1; the interaction is direct and may control TREX1 subcellular location. Forms a complex with UBXN4 and VCP. Interacts (via UBA domain) with UBQLN4 (via ubiquitin-like domain). Found in a complex with UBQLN2 and MAP1LC3A/B/C. The monomeric form interacts with PSEN2. The monomeric form interacts with PSEN1. Interacts with ORAI1. Interacts (via UBA domain) with TICAM1. Interacts with EPS15. Interacts (via UBA domain) with UBA52 and (via ubiquitin-like domain) with PSMD3 and PSMD4. Interacts with HERPUD1. Interacts with MAP1LC3A/B/C in the presence of UBQLN4. Interacts (via ubiquitin-like domain) with EPS15 (via UIM domains) and both the ubiquitinated and non-ubiquitinated forms can interact with EPS15. Interacts (via ubiquitin-like domain) with EPS15L1, HGS (via UIM domain) and STAM2 (via UIM domain). Interacts with BCL2L10/BCL-B; in the cytoplasm. As to quaternary structure, monomeric form interacts with PSEN1. In terms of processing, degraded during both macroautophagy and during chaperone-mediated autophagy (CMA). Post-translationally, phosphorylated. Ubiquitinated. In terms of tissue distribution, brain (at protein level). Ubiquitous. Highly expressed throughout the brain; detected in neurons and in neuropathological lesions, such as neurofibrillary tangles and Lewy bodies. Highly expressed in heart, placenta, pancreas, lung, liver, skeletal muscle and kidney.

Its subcellular location is the cytoplasm. The protein localises to the nucleus. The protein resides in the endoplasmic reticulum. It localises to the cytoplasmic vesicle. It is found in the autophagosome. Its subcellular location is the cell membrane. Plays an important role in the regulation of different protein degradation mechanisms and pathways including ubiquitin-proteasome system (UPS), autophagy and endoplasmic reticulum-associated protein degradation (ERAD) pathway. Mediates the proteasomal targeting of misfolded or accumulated proteins for degradation by binding (via UBA domain) to their polyubiquitin chains and by interacting (via ubiquitin-like domain) with the subunits of the proteasome. Plays a role in the ERAD pathway via its interaction with ER-localized proteins UBXN4, VCP and HERPUD1 and may form a link between the polyubiquitinated ERAD substrates and the proteasome. Involved in the regulation of macroautophagy and autophagosome formation; required for maturation of autophagy-related protein LC3 from the cytosolic form LC3-I to the membrane-bound form LC3-II and may assist in the maturation of autophagosomes to autolysosomes by mediating autophagosome-lysosome fusion. Negatively regulates the TICAM1/TRIF-dependent toll-like receptor signaling pathway by decreasing the abundance of TICAM1 via the autophagic pathway. Promotes the ubiquitination and lysosomal degradation of ORAI1, consequently down-regulating the ORAI1-mediated Ca2+ mobilization. Suppresses the maturation and proteasomal degradation of amyloid beta A4 protein (A4) by stimulating the lysine 63 (K63)-linked polyubiquitination. Delays the maturation of A4 by sequestering it in the Golgi apparatus and preventing its transport to the cell surface for subsequent processing. Ubiquitinates BCL2L10 and thereby stabilizes protein abundance. Its function is as follows. Plays a role in unfolded protein response (UPR) by attenuating the induction of UPR-inducible genes, DDTI3/CHOP, HSPA5 and PDIA2 during ER stress. Plays a key role in the regulation of the levels of PSEN1 by targeting its accumulation to aggresomes which may then be removed from cells by autophagocytosis. Functionally, plays a role in unfolded protein response (UPR) by attenuating the induction of UPR-inducible genes, DDTI3/CHOP, HSPA5 and PDIA2 during ER stress. This is Ubiquilin-1 (UBQLN1) from Homo sapiens (Human).